The chain runs to 447 residues: Protein O-GlcNAcase (447 aa).

The region spanning 1–277 (MLTGVIEGFY…TTGAYLADPD (277 aa)) is the GH84 domain. A protein is bound by residues G8, K39, and D115. Residue D116 is the Proton donor of the active site. Residues Y160, 219–221 (WDN), D226, and N254 each bind a protein.

The protein belongs to the glycosyl hydrolase 84 family.

The catalysed reaction is 3-O-(N-acetyl-beta-D-glucosaminyl)-L-seryl-[protein] + H2O = N-acetyl-D-glucosamine + L-seryl-[protein]. It carries out the reaction 3-O-(N-acetyl-beta-D-glucosaminyl)-L-threonyl-[protein] + H2O = L-threonyl-[protein] + N-acetyl-D-glucosamine. With respect to regulation, inhibited by PUGNac (O-(2-acetamido-2-deoxy-D-glucopyranosylidene)amino-N-phenylcarbamate). Cleaves GlcNAc from O-glycosylated proteins. Can use p-nitrophenyl-beta-GlcNAc and 4-methylumbelliferone-GlcNAc as substrate (in vitro). In Oceanicola granulosus (strain ATCC BAA-861 / DSM 15982 / KCTC 12143 / HTCC2516), this protein is Protein O-GlcNAcase.